A 332-amino-acid chain; its full sequence is Homoserine kinase (332 aa).

The protein belongs to the pseudomonas-type ThrB family.

It carries out the reaction L-homoserine + ATP = O-phospho-L-homoserine + ADP + H(+). It participates in amino-acid biosynthesis; L-threonine biosynthesis; L-threonine from L-aspartate: step 4/5. The protein is Homoserine kinase of Burkholderia vietnamiensis (strain G4 / LMG 22486) (Burkholderia cepacia (strain R1808)).